Consider the following 205-residue polypeptide: Rho-related GTP-binding protein RhoQ (205 aa).

16–23 contributes to the GTP binding site; it reads GDGAVGKT. Residues 38 to 46 carry the Effector region motif; it reads YVPTVFDHY. Residues 63–67 and 121–124 each bind GTP; these read DTAGQ and TQID. C202 carries the cysteine methyl ester modification. The S-farnesyl cysteine moiety is linked to residue C202. Residues 203–205 constitute a propeptide, removed in mature form; that stretch reads LIT.

Belongs to the small GTPase superfamily. Rho family. As to quaternary structure, interacts with EXO70, CDC42EP1, CDC42EP2 and CDC42EP3 in a GTP-dependent manner. Interacts with CDC42EP4, PARD6A, PARD6G (and probably PARD6B) in a GTP-dependent manner. Part of a quaternary complex containing PARD3, some PARD6 protein (PARD6A, PARD6B or PARD6G) and some atypical PKC protein (PRKCI or PRKCZ). Interacts with GOPC. Interacts with ARHGAP33/TCGAP. Post-translationally, may be post-translationally modified by both palmitoylation and polyisoprenylation.

Its subcellular location is the cytoplasm. The protein localises to the cell membrane. Its activity is regulated as follows. Regulated by guanine nucleotide exchange factors (GEFs) which promote the exchange of bound GDP for free GTP, GTPase activating proteins (GAPs) which increase the GTP hydrolysis activity, and GDP dissociation inhibitors which inhibit the dissociation of the nucleotide from the GTPase. In terms of biological role, plasma membrane-associated small GTPase which cycles between an active GTP-bound and an inactive GDP-bound state. In active state binds to a variety of effector proteins to regulate cellular responses. Involved in epithelial cell polarization processes. May play a role in CFTR trafficking to the plasma membrane. Causes the formation of thin, actin-rich surface projections called filopodia. The protein is Rho-related GTP-binding protein RhoQ (Rhoq) of Mus musculus (Mouse).